Here is a 121-residue protein sequence, read N- to C-terminus: Iron-sulfur cluster assembly protein CyaY (121 aa).

Belongs to the frataxin family.

Functionally, involved in iron-sulfur (Fe-S) cluster assembly. May act as a regulator of Fe-S biogenesis. The sequence is that of Iron-sulfur cluster assembly protein CyaY from Buchnera aphidicola subsp. Schizaphis graminum (strain Sg).